A 424-amino-acid chain; its full sequence is Envelope glycoprotein M (424 aa).

Over 1-23 the chain is Intravirion; sequence MASRARMERNYRGLSHIDYVHKK. Residues 24–44 form a helical membrane-spanning segment; sequence MWVVQAVCFGIAVLVFFGTLV. Topologically, residues 45 to 94 are virion surface; the sequence is AASINLTEGFPCFFAAVVDYRTVNTTLVHTGLTYPRLGGVVPVLFFQTKA. A helical transmembrane segment spans residues 95-115; that stretch reads VVFFFYATSIVFVFLVCYITV. Residues 116–143 are Intravirion-facing; that stretch reads GAIISSKKHVGAAYMGSGAFVFSLMASP. The chain crosses the membrane as a helical span at residues 144–164; it reads LTILLGTVSIWLLQAVVIVLA. At 165–166 the chain is on the virion surface side; sequence HK. The helical transmembrane segment at 167–187 threads the bilayer; it reads LIVLAAAVYLVHFSTITFFYG. Residues 188 to 226 lie on the Intravirion side of the membrane; sequence YFCGRGVDSKVYAEDISSAKDIDGSLHKLIGNVRAMMVN. A helical transmembrane segment spans residues 227 to 247; it reads LLSIVYSIILIMSSLMFGMLL. Residues 248–261 lie on the Virion surface side of the membrane; it reads ANSFTLKFWHVIVT. A helical membrane pass occupies residues 262-282; sequence VLITTSVLTLIYLLVIEFLIA. Residue arginine 283 is a topological domain, intravirion. The helical transmembrane segment at 284-304 threads the bilayer; sequence YVHIILGAYIGLLIGYGMLWT. Residues 305 to 327 are Virion surface-facing; sequence TTCDYVNRFYYAMGANASNLRIA. A helical membrane pass occupies residues 328–348; the sequence is CHSVLAVFTVLILLAMVVRLI. Residues 349-424 lie on the Intravirion side of the membrane; it reads RASLYHRRRS…YSGSESEWDD (76 aa). A disordered region spans residues 382–424; the sequence is SYKQRGSQSEDERALTQSRSAEASDEDTIYDRVYSGSESEWDD.

It belongs to the herpesviridae glycoprotein M family. As to quaternary structure, interacts (via N-terminus) with gN (via N-terminus). The gM-gN heterodimer forms the gCII complex.

Its subcellular location is the virion membrane. The protein resides in the host Golgi apparatus. The protein localises to the host trans-Golgi network. It is found in the host endosome membrane. It localises to the host nucleus inner membrane. Its function is as follows. Envelope glycoprotein important for virion assembly and egress. Plays a role in the correct incorporation of gH-gL into virion membrane. Directs the glycoprotein N (gN) to the host trans-Golgi network. The protein is Envelope glycoprotein M of Gallid herpesvirus 2 (strain Chicken/Md5/ATCC VR-987) (GaHV-2).